We begin with the raw amino-acid sequence, 313 residues long: Proclavaminate amidinohydrolase (313 aa).

Residues H121, D144, H146, D148, D235, and D237 each contribute to the Mn(2+) site.

The protein belongs to the arginase family. As to quaternary structure, homohexamer. It depends on Mn(2+) as a cofactor.

The enzyme catalyses amidinoproclavaminate + H2O = proclavaminate + urea. The protein operates within antibiotic biosynthesis; clavulanate biosynthesis; clavulanate from D-glyceraldehyde 3-phosphate and L-arginine: step 4/8. The chain is Proclavaminate amidinohydrolase (pah) from Streptomyces clavuligerus.